A 421-amino-acid polypeptide reads, in one-letter code: MQDSIEQYMQAVGQQARKASRVLSSASTHTKNNALSAIYTALVNHEPEILAANAVDMQKGRDSHLDSALLDRLELTPTRFKGMLQGLKDVIALTDPIGEITDLAYRPSGIQLGKMRVPLGVIGMIYESRPNVTLEAASLALKSGNAIILRGGSEALQSNKAIATAIQHGLKVAGLPEHAIQVIETADRAAVGQLITMTEYVDVIVPRGGKSLIERISNEARIPVIKHLDGNCHVFIDVEADLHKALPIALNAKTHRYGVCNAMETLLVHEEIAEEFLPRIAELYAEKHVELRGCQETRRILGSSVKTATEEDWYTEYLAPILAIKVVEHIDQAIEHINKYGSHHTDAIVTENYSKVRKFLAEVDSSSVMINASTRFADGFEYGLGAEIGISTDKIHARGPVGLEGLTSQKWIVFGDGQIRH.

The protein belongs to the gamma-glutamyl phosphate reductase family.

It localises to the cytoplasm. The enzyme catalyses L-glutamate 5-semialdehyde + phosphate + NADP(+) = L-glutamyl 5-phosphate + NADPH + H(+). It participates in amino-acid biosynthesis; L-proline biosynthesis; L-glutamate 5-semialdehyde from L-glutamate: step 2/2. Its function is as follows. Catalyzes the NADPH-dependent reduction of L-glutamate 5-phosphate into L-glutamate 5-semialdehyde and phosphate. The product spontaneously undergoes cyclization to form 1-pyrroline-5-carboxylate. The sequence is that of Gamma-glutamyl phosphate reductase from Acinetobacter baylyi (strain ATCC 33305 / BD413 / ADP1).